A 35-amino-acid chain; its full sequence is Mu-thomitoxin-Hme1c (35 aa).

Disulfide bonds link Cys-2/Cys-18, Cys-9/Cys-23, and Cys-17/Cys-34.

Belongs to the neurotoxin 07 (Beta/delta-agtx) family. Expressed by the venom gland.

The protein localises to the secreted. Functionally, gating-modifier toxin that inhibits mammalian and insect voltage-gated sodium channels. It shifts the voltage dependence of channel activation to more positive voltages. It shows potent activity on Nav1.4/SCN4A (IC(50)=103 nM), Nav1.5/SCN5A (IC(50)=268 nM) and Para/DmNav1 (IC(50)=555 nM) and lower activities on Nav1.2/SCN2A (IC(50)=1447 nM) and Nav1.6/SCN8A (IC(50)=3504 nM). In addition, at a concentration of 1 uM, the toxin inhibits 90-100% of sodium current through Nav1.2/SCN2A, Nav1.4/SCN4A, Nav1.5/SCN5A, Nav1.6/SCN8A and Para/DmNav1 channels, when the voltage of maximal activation of the channel in control conditions is applied. It binds to the S3-S4 helix-loop-helix motif in the voltage-sensing domain of repeat 1 (shown on hNav1.4/SCN4A). The toxin is amphiphilic and binds to both neutral and negatively charged lipid vesicles with high affinity. The hydrophobic face lies on the opposite side to the hydrophobic faces of classical gating modifiers. In Heriaeus mellotteei (Crab spider), this protein is Mu-thomitoxin-Hme1c.